Reading from the N-terminus, the 524-residue chain is Tubulin-specific chaperone E (524 aa).

At S2 the chain carries N-acetylserine. The CAP-Gly domain maps to 27-71 (GAVPPVAGLWLGVEWDNPERGKHDGSHEGTMYFKCRHPTGGSFVR). LRR repeat units lie at residues 154 to 175 (NIRV…VLIA), 180 to 201 (DLEA…PTLT), 206 to 227 (TLKT…HCAP), 231 to 253 (VLEE…NVLQ), 254 to 275 (KMRL…SLIA), 279 to 300 (RLEH…DAEI), and 309 to 330 (ALKY…NELD). The region spanning 343-381 (NPLSKADKAEEIIIAKIAQLRTLNRCQILPEERRGAELD) is the LRRCT domain. K460 carries the N6-acetyllysine modification. A Phosphoserine modification is found at S492.

It belongs to the TBCE family. As to quaternary structure, supercomplex made of cofactors A to E. Cofactors A and D function by capturing and stabilizing tubulin in a quasi-native conformation. Cofactor E binds to the cofactor D-tubulin complex; interaction with cofactor C then causes the release of tubulin polypeptides that are committed to the native state. Cofactors B and E can form a heterodimer which binds to alpha-tubulin and enhances their ability to dissociate tubulin heterodimers. Interacts with TBCD. In terms of tissue distribution, ubiquitously expressed.

The protein localises to the cytoplasm. It localises to the cytoskeleton. Functionally, tubulin-folding protein; involved in the second step of the tubulin folding pathway and in the regulation of tubulin heterodimer dissociation. Required for correct organization of microtubule cytoskeleton and mitotic splindle, and maintenance of the neuronal microtubule network. This chain is Tubulin-specific chaperone E (Tbce), found in Mus musculus (Mouse).